The sequence spans 302 residues: Pathogenicity locus probable regulatory protein HrpS (302 aa).

In terms of domain architecture, Sigma-54 factor interaction spans 9–237; sequence DDLDEERVPN…LKAAAKRHVL (229 aa). Residues 37–44 and 99–108 each bind ATP; these read GETGTGKD and AQGGTLYLDE. Positions 279–298 form a DNA-binding region, H-T-H motif; the sequence is IDAASLELDMPRRTLYRRIK.

Member of the two-component regulatory system HrpR/HrpS that regulates the activation of the sigma factor hrpL which itself induces the expression of hprD as well as other hrp loci which are involved in plant pathogenicity, hrmA and avr genes. Probably interacts with sigma-54. In Pseudomonas savastanoi pv. phaseolicola (Pseudomonas syringae pv. phaseolicola), this protein is Pathogenicity locus probable regulatory protein HrpS (hrpS).